A 445-amino-acid chain; its full sequence is Exodeoxyribonuclease 7 large subunit (445 aa).

This sequence belongs to the XseA family. As to quaternary structure, heterooligomer composed of large and small subunits.

Its subcellular location is the cytoplasm. It catalyses the reaction Exonucleolytic cleavage in either 5'- to 3'- or 3'- to 5'-direction to yield nucleoside 5'-phosphates.. Bidirectionally degrades single-stranded DNA into large acid-insoluble oligonucleotides, which are then degraded further into small acid-soluble oligonucleotides. The protein is Exodeoxyribonuclease 7 large subunit of Limosilactobacillus reuteri (strain DSM 20016) (Lactobacillus reuteri).